The following is a 235-amino-acid chain: Interleukin-34 (235 aa).

A signal peptide spans 1-20 (MPWGLAWLYCLGILLDVALG). Residue Asn100 is glycosylated (N-linked (GlcNAc...) asparagine).

Belongs to the IL-34 family. As to quaternary structure, homodimer. Interacts with CSF1R.

It is found in the secreted. In terms of biological role, cytokine that promotes the proliferation, survival and differentiation of monocytes and macrophages. Promotes the release of pro-inflammatory chemokines, and thereby plays an important role in innate immunity and in inflammatory processes. Plays an important role in the regulation of osteoclast proliferation and differentiation, and in the regulation of bone resorption. Signaling via CSF1R and its downstream effectors stimulates phosphorylation of MAPK1/ERK2 AND MAPK3/ERK1. In Mus musculus (Mouse), this protein is Interleukin-34 (Il34).